A 205-amino-acid chain; its full sequence is MTPPERLFLSRVRGTPLHLLLLGLLLVLLPGAQGLPGVGLTPSAAQTARQHPKMHLAHSTLKPAAHLIGDPSKQNSLLWRANTDRAFLQDGFSLSNNSLLVPTSGIYFVYSQVVFSGKAYSPKATPTPLYLAHEVQLFSSQYPFHVPLLSSQKMVYPGLQEPWLHSMYHGAAFQLTQGDQLSTHTDGIPHLVLSPSTVFFGAFAL.

Residues Met-1–Gly-34 form the signal peptide. The O-linked (GalNAc...) threonine glycan is linked to Thr-41. One can recognise a THD domain in the interval Pro-63 to Leu-205. N-linked (GlcNAc...) asparagine glycosylation is present at Asn-96.

Belongs to the tumor necrosis factor family. Homotrimer, and heterotrimer of either two LTB and one LTA subunits or (less prevalent) two LTA and one LTB subunits. Interacts with TNFRSF14.

The protein resides in the secreted. The protein localises to the membrane. In terms of biological role, cytokine that in its homotrimeric form binds to TNFRSF1A/TNFR1, TNFRSF1B/TNFBR and TNFRSF14/HVEM. In its heterotrimeric form with LTB binds to TNFRSF3/LTBR. Lymphotoxin is produced by lymphocytes and is cytotoxic for a wide range of tumor cells in vitro and in vivo. This is Lymphotoxin-alpha (LTA) from Macaca mulatta (Rhesus macaque).